The chain runs to 90 residues: Small ribosomal subunit protein uS15 (90 aa).

Belongs to the universal ribosomal protein uS15 family. Part of the 30S ribosomal subunit. Forms a bridge to the 50S subunit in the 70S ribosome, contacting the 23S rRNA.

One of the primary rRNA binding proteins, it binds directly to 16S rRNA where it helps nucleate assembly of the platform of the 30S subunit by binding and bridging several RNA helices of the 16S rRNA. Functionally, forms an intersubunit bridge (bridge B4) with the 23S rRNA of the 50S subunit in the ribosome. In Blochmanniella floridana, this protein is Small ribosomal subunit protein uS15.